The sequence spans 354 residues: Homer protein homolog 2 (354 aa).

The 110-residue stretch at 1–110 folds into the WH1 domain; the sequence is MGEQPIFTTR…EKFQEVKEAA (110 aa). Residues 92–122 adopt a coiled-coil conformation; the sequence is SEQQLTKFAEKFQEVKEAAKIAKDKTQEKIE. Positions 112-122 are enriched in basic and acidic residues; sequence IAKDKTQEKIE. Residues 112 to 166 form a disordered region; that stretch reads IAKDKTQEKIETSSNHSQESGRETPSSTQASSVNGTDDEKASHAGPANTHLKSEN. Over residues 123-146 the composition is skewed to polar residues; the sequence is TSSNHSQESGRETPSSTQASSVNG. The stretch at 160–329 forms a coiled coil; that stretch reads THLKSENDKL…RHLKVELKSF (170 aa).

The protein belongs to the Homer family. Forms coiled-coil structures that mediate homo- and heteromultimerization. Interacts with NFATC2; interaction is reduced by AKT activation. Interacts with NFATC1 and NFATC4. Interacts with DAGLA (via PPXXF motif); this interaction is required for the cell membrane localization of DAGLA.

Its subcellular location is the cytoplasm. The protein resides in the cell membrane. The protein localises to the postsynaptic density. It localises to the synapse. It is found in the cell projection. Its subcellular location is the stereocilium. Postsynaptic density scaffolding protein. Binds and cross-links cytoplasmic regions of GRM1, GRM5, ITPR1, DNM3, RYR1, RYR2, SHANK1 and SHANK3. By physically linking GRM1 and GRM5 with ER-associated ITPR1 receptors, it aids the coupling of surface receptors to intracellular calcium release. May also couple GRM1 to PI3 kinase through its interaction with AGAP2. Isoforms can be differently regulated and may play an important role in maintaining the plasticity at glutamatergic synapses. Required for normal hearing. Negatively regulates T cell activation by inhibiting the calcineurin-NFAT pathway. Acts by competing with calcineurin/PPP3CA for NFAT protein binding, hence preventing NFAT activation by PPP3CA. The protein is Homer protein homolog 2 of Homo sapiens (Human).